A 335-amino-acid chain; its full sequence is Tetraacyldisaccharide 4'-kinase (335 aa).

Position 58 to 65 (Thr58 to Thr65) interacts with ATP.

It belongs to the LpxK family.

It carries out the reaction a lipid A disaccharide + ATP = a lipid IVA + ADP + H(+). It participates in glycolipid biosynthesis; lipid IV(A) biosynthesis; lipid IV(A) from (3R)-3-hydroxytetradecanoyl-[acyl-carrier-protein] and UDP-N-acetyl-alpha-D-glucosamine: step 6/6. Transfers the gamma-phosphate of ATP to the 4'-position of a tetraacyldisaccharide 1-phosphate intermediate (termed DS-1-P) to form tetraacyldisaccharide 1,4'-bis-phosphate (lipid IVA). The chain is Tetraacyldisaccharide 4'-kinase from Caulobacter sp. (strain K31).